A 300-amino-acid polypeptide reads, in one-letter code: uncharacterized protein (300 aa).

Catalysis depends on Tyr53, which acts as the Proton donor. 210–220 (SPLAGGKVFTE) lines the NADP(+) pocket.

The protein belongs to the aldo/keto reductase family. Aldo/keto reductase 2 subfamily.

This is an uncharacterized protein from Bacillus subtilis (strain 168).